Reading from the N-terminus, the 401-residue chain is Probable aspartate/prephenate aminotransferase (401 aa).

L-aspartate is bound by residues Gly39, Trp125, and Asn175. Lys239 bears the N6-(pyridoxal phosphate)lysine mark. Arg375 contacts L-aspartate.

This sequence belongs to the class-I pyridoxal-phosphate-dependent aminotransferase family. Homodimer. Requires pyridoxal 5'-phosphate as cofactor.

It localises to the cytoplasm. It carries out the reaction L-aspartate + 2-oxoglutarate = oxaloacetate + L-glutamate. The catalysed reaction is L-arogenate + 2-oxoglutarate = prephenate + L-glutamate. Catalyzes the reversible conversion of aspartate and 2-oxoglutarate to glutamate and oxaloacetate. Can also transaminate prephenate in the presence of glutamate. The polypeptide is Probable aspartate/prephenate aminotransferase (aatA) (Rickettsia conorii (strain ATCC VR-613 / Malish 7)).